The following is a 432-amino-acid chain: Benzoyl-CoA reductase subunit B (432 aa).

It belongs to the FldB/FldC dehydratase alpha/beta subunit family. In terms of assembly, heterotetramer composed of A, B, C, and D subunits. Requires iron-sulfur cluster as cofactor. An oxidized flavin is required as a cofactor.

It catalyses the reaction cyclohexa-1,5-diene-1-carbonyl-CoA + oxidized 2[4Fe-4S]-[ferredoxin] + 2 ADP + 2 phosphate = reduced 2[4Fe-4S]-[ferredoxin] + benzoyl-CoA + 2 ATP + 2 H2O. It carries out the reaction 3-hydroxybenzoyl-CoA + AH2 + 2 ATP + 2 H2O = 3-hydroxycyclohexa-1,5-diene-1-carbonyl-CoA + A + 2 ADP + 2 phosphate + 2 H(+). Functionally, catalyzes the anaerobic reduction of benzoyl-CoA and 3-hydroxybenzoyl-CoA to form cyclohexa-1,5-diene-1-carbonyl-CoA and 3-hydroxycyclohexa-1,5-diene-1-carbonyl-CoA, respectively. The enzyme also reduces other benzoyl-CoA analogs with small substituents at the aromatic ring. In Thauera aromatica, this protein is Benzoyl-CoA reductase subunit B (bcrB).